The primary structure comprises 286 residues: NAD kinase (286 aa).

D74 functions as the Proton acceptor in the catalytic mechanism. Residues 74–75 (DG), 148–149 (ND), D178, A186, 189–194 (TAYNLS), and Q244 contribute to the NAD(+) site.

It belongs to the NAD kinase family. A divalent metal cation is required as a cofactor.

The protein resides in the cytoplasm. The catalysed reaction is NAD(+) + ATP = ADP + NADP(+) + H(+). Involved in the regulation of the intracellular balance of NAD and NADP, and is a key enzyme in the biosynthesis of NADP. Catalyzes specifically the phosphorylation on 2'-hydroxyl of the adenosine moiety of NAD to yield NADP. This chain is NAD kinase, found in Campylobacter jejuni subsp. jejuni serotype O:6 (strain 81116 / NCTC 11828).